A 343-amino-acid chain; its full sequence is Tetraacyldisaccharide 4'-kinase (343 aa).

Position 65–72 (65–72) interacts with ATP; sequence HAGGTGKT.

Belongs to the LpxK family.

The enzyme catalyses a lipid A disaccharide + ATP = a lipid IVA + ADP + H(+). Its pathway is glycolipid biosynthesis; lipid IV(A) biosynthesis; lipid IV(A) from (3R)-3-hydroxytetradecanoyl-[acyl-carrier-protein] and UDP-N-acetyl-alpha-D-glucosamine: step 6/6. Functionally, transfers the gamma-phosphate of ATP to the 4'-position of a tetraacyldisaccharide 1-phosphate intermediate (termed DS-1-P) to form tetraacyldisaccharide 1,4'-bis-phosphate (lipid IVA). This Neisseria gonorrhoeae (strain ATCC 700825 / FA 1090) protein is Tetraacyldisaccharide 4'-kinase.